Here is a 1018-residue protein sequence, read N- to C-terminus: UPF0182 protein Francci3_3781 (1018 aa).

The next 7 membrane-spanning stretches (helical) occupy residues 13 to 33, 60 to 80, 109 to 129, 167 to 187, 208 to 228, 250 to 270, and 283 to 303; these read TKVLVPVLLVIVLAITIIAIF, ILLFVLFGVVMAIIVGTNIVL, MLLILLAVTTLFGLAAGLSAA, FLLGFLLTAVLLSLLVTLLTH, AHISVLLGLLALLKAWAYYLD, AVLPAKLILLFISLACAVLFI, and LGAGILVLSSVVIGGIYPAIV. Composition is skewed to low complexity over residues 886 to 896 and 960 to 980; these read TTDAGQDGTPA and SSPAATPPAATATRAGASVPA. Disordered stretches follow at residues 886–920 and 960–1018; these read TTDAGQDGTPAPRSGQGGAGVPPPGQTALQDAVGD and SSPA…PAPG. Over residues 981 to 995 the composition is skewed to pro residues; it reads SPVPASPAAKPPAPS.

Belongs to the UPF0182 family.

Its subcellular location is the cell membrane. This Frankia casuarinae (strain DSM 45818 / CECT 9043 / HFP020203 / CcI3) protein is UPF0182 protein Francci3_3781.